The primary structure comprises 214 residues: Fruiting body protein SC14 (214 aa).

Positions 1 to 18 are cleaved as a signal peptide; it reads MKLNIAILLAALAATASA. N-linked (GlcNAc...) asparagine glycans are attached at residues Asn61 and Asn144. The region spanning 72–195 is the SCP domain; it reads LTAHNDERAQ…KSLWYYVCNY (124 aa).

It belongs to the CRISP family.

It is found in the secreted. The protein is Fruiting body protein SC14 (SC14) of Schizophyllum commune (Split gill fungus).